A 782-amino-acid polypeptide reads, in one-letter code: E3 UFM1-protein ligase 1 homolog (782 aa).

The segment at 405–478 is disordered; sequence VSTQELEDDG…TRGGGGASKK (74 aa).

This sequence belongs to the UFL1 family.

In terms of biological role, E3 UFM1-protein ligase that mediates ufmylation of target proteins. The polypeptide is E3 UFM1-protein ligase 1 homolog (Drosophila sechellia (Fruit fly)).